The sequence spans 344 residues: Arginine N-succinyltransferase (344 aa).

A succinyl-CoA-binding site is contributed by L125. H229 serves as the catalytic Proton donor.

It belongs to the arginine N-succinyltransferase family.

The enzyme catalyses succinyl-CoA + L-arginine = N(2)-succinyl-L-arginine + CoA + H(+). Its pathway is amino-acid degradation; L-arginine degradation via AST pathway; L-glutamate and succinate from L-arginine: step 1/5. Its function is as follows. Catalyzes the transfer of succinyl-CoA to arginine to produce N(2)-succinylarginine. This Escherichia coli O6:K15:H31 (strain 536 / UPEC) protein is Arginine N-succinyltransferase.